The following is a 266-amino-acid chain: Urease accessory protein UreD (266 aa).

This sequence belongs to the UreD family. As to quaternary structure, ureD, UreF and UreG form a complex that acts as a GTP-hydrolysis-dependent molecular chaperone, activating the urease apoprotein by helping to assemble the nickel containing metallocenter of UreC. The UreE protein probably delivers the nickel.

The protein localises to the cytoplasm. Required for maturation of urease via the functional incorporation of the urease nickel metallocenter. This is Urease accessory protein UreD from Jannaschia sp. (strain CCS1).